The chain runs to 134 residues: Profilin-4 (134 aa).

The cysteines at positions 13 and 118 are disulfide-linked. Residues 84–100 (AVIRGKKGSGGITIKKT) carry the Involved in PIP2 interaction motif. Thr114 is subject to Phosphothreonine.

It belongs to the profilin family. Occurs in many kinds of cells as a complex with monomeric actin in a 1:1 ratio. Post-translationally, phosphorylated by MAP kinases.

It is found in the cytoplasm. It localises to the cytoskeleton. In terms of biological role, binds to actin and affects the structure of the cytoskeleton. At high concentrations, profilin prevents the polymerization of actin, whereas it enhances it at low concentrations. This chain is Profilin-4, found in Olea europaea (Common olive).